A 154-amino-acid chain; its full sequence is Ribonuclease H (154 aa).

The RNase H type-1 domain maps to 1 to 142; that stretch reads MTKQVEIFTD…CDELAREGAN (142 aa). Residues Asp-10, Glu-48, Asp-70, and Asp-134 each coordinate Mg(2+).

It belongs to the RNase H family. As to quaternary structure, monomer. It depends on Mg(2+) as a cofactor.

It is found in the cytoplasm. It carries out the reaction Endonucleolytic cleavage to 5'-phosphomonoester.. Functionally, endonuclease that specifically degrades the RNA of RNA-DNA hybrids. The polypeptide is Ribonuclease H (Yersinia enterocolitica serotype O:8 / biotype 1B (strain NCTC 13174 / 8081)).